A 649-amino-acid polypeptide reads, in one-letter code: Acetyl-coenzyme A synthetase (649 aa).

Residues 191–194 (RGGR), threonine 311, and asparagine 335 contribute to the CoA site. Residues 387-389 (GEP), 411-416 (DTWWQT), aspartate 500, and arginine 515 each bind ATP. Residue serine 523 participates in CoA binding. Arginine 526 contributes to the ATP binding site. 3 residues coordinate Mg(2+): valine 537, histidine 539, and isoleucine 542. CoA is bound at residue arginine 584. At lysine 609 the chain carries N6-acetyllysine.

This sequence belongs to the ATP-dependent AMP-binding enzyme family. It depends on Mg(2+) as a cofactor. Acetylated. Deacetylation by the SIR2-homolog deacetylase activates the enzyme.

The enzyme catalyses acetate + ATP + CoA = acetyl-CoA + AMP + diphosphate. Its function is as follows. Catalyzes the conversion of acetate into acetyl-CoA (AcCoA), an essential intermediate at the junction of anabolic and catabolic pathways. AcsA undergoes a two-step reaction. In the first half reaction, AcsA combines acetate with ATP to form acetyl-adenylate (AcAMP) intermediate. In the second half reaction, it can then transfer the acetyl group from AcAMP to the sulfhydryl group of CoA, forming the product AcCoA. This is Acetyl-coenzyme A synthetase from Psychromonas ingrahamii (strain DSM 17664 / CCUG 51855 / 37).